A 315-amino-acid polypeptide reads, in one-letter code: DNA-directed RNA polymerase subunit alpha (315 aa).

The alpha N-terminal domain (alpha-NTD) stretch occupies residues M1–T228. The segment at K245 to E315 is alpha C-terminal domain (alpha-CTD).

It belongs to the RNA polymerase alpha chain family. As to quaternary structure, homodimer. The RNAP catalytic core consists of 2 alpha, 1 beta, 1 beta' and 1 omega subunit. When a sigma factor is associated with the core the holoenzyme is formed, which can initiate transcription.

It catalyses the reaction RNA(n) + a ribonucleoside 5'-triphosphate = RNA(n+1) + diphosphate. In terms of biological role, DNA-dependent RNA polymerase catalyzes the transcription of DNA into RNA using the four ribonucleoside triphosphates as substrates. The sequence is that of DNA-directed RNA polymerase subunit alpha from Clostridium botulinum (strain Alaska E43 / Type E3).